The sequence spans 335 residues: Probable nicotianamine synthase 2 (335 aa).

It belongs to the nicotianamine synthase (NAS)-like family.

It catalyses the reaction 3 S-adenosyl-L-methionine = nicotianamine + 3 S-methyl-5'-thioadenosine + 3 H(+). Functionally, synthesizes nicotianamine, a polyamine that is the first intermediate in the synthesis of the phytosiderophores of the mugineic acid type found in gramineae which serves as a sensor for the physiological iron status within the plant, and/or might be involved in the transport of iron. The polypeptide is Probable nicotianamine synthase 2 (NAS2) (Hordeum vulgare (Barley)).